Consider the following 505-residue polypeptide: Circadian clock protein KaiC3 (505 aa).

KaiC domains are found at residues 10 to 252 and 253 to 485; these read EKLE…KSSD and IRIT…LAGT. Ser423 carries the post-translational modification Phosphoserine; by autocatalysis. At Thr424 the chain carries Phosphothreonine; by autocatalysis.

The protein belongs to the KaiC family. Multimerizes, probably forming homohexamers, no interaction with KaiC1 or KaiC2 is seen. In another study forms hexamers, interacts with KaiB1, KaiB3, and KaiC1. Autophosphorylates and dephosphorylates. Dephosphorylation of KaiC3 was higher at 25 than at 30 or 35 degrees Celsius.

It catalyses the reaction L-seryl-[protein] + ATP = O-phospho-L-seryl-[protein] + ADP + H(+). The enzyme catalyses L-threonyl-[protein] + ATP = O-phospho-L-threonyl-[protein] + ADP + H(+). The catalysed reaction is ATP + H2O = ADP + phosphate + H(+). Its activity is regulated as follows. ATPase activity is influenced by KaiB1 and KaiB3 in vitro; ATPase is reduced 35% by the KaiB1 tetramer and 55% by the KaiB3 monomer but not affected by KaiA or the KaiB3 tetramer. Seems to be linked to dark adaption of Synechocystis cells, but is not as essential as the core oscillator KaiAB1C1 for the circadian cycle. KaiB3 and KaiC3 may cross talk with the core oscillator. Autophosphorylates and dephosphorylates independently of KaiA. Has a weak ATPase, hydrolyzes 8.5 ATP/monomer/day, has no detectable ATP synthesis activity. ATPase activity reduced 55% by KaiB3 monomer but not the KaiB3 tetramer or KaiA in vitro, reduced 35% by KaiB1 tetramer. This Synechocystis sp. (strain ATCC 27184 / PCC 6803 / Kazusa) protein is Circadian clock protein KaiC3.